A 310-amino-acid chain; its full sequence is N-acetyl-gamma-glutamyl-phosphate reductase (310 aa).

The active site involves cysteine 117.

Belongs to the NAGSA dehydrogenase family. Type 2 subfamily.

Its subcellular location is the cytoplasm. The catalysed reaction is N-acetyl-L-glutamate 5-semialdehyde + phosphate + NADP(+) = N-acetyl-L-glutamyl 5-phosphate + NADPH + H(+). It participates in amino-acid biosynthesis; L-arginine biosynthesis; N(2)-acetyl-L-ornithine from L-glutamate: step 3/4. Catalyzes the NADPH-dependent reduction of N-acetyl-5-glutamyl phosphate to yield N-acetyl-L-glutamate 5-semialdehyde. This Rhizobium meliloti (strain 1021) (Ensifer meliloti) protein is N-acetyl-gamma-glutamyl-phosphate reductase.